The sequence spans 191 residues: Calcium and integrin-binding protein 1 (191 aa).

The N-myristoyl glycine moiety is linked to residue Gly-2. EF-hand domains lie at 103–138 (TPDI…LTGE) and 148–183 (EMKQ…SPDF). Positions 116, 118, 120, 122, 127, 161, 163, 165, 167, and 172 each coordinate Ca(2+). Position 118 is a phosphoserine (Asp-118).

Monomer. Interacts with MYO1C. Interacts (via C-terminal region) with PPP3R1 and CACNA1C; the interactions increase upon cardiomyocytes hypertrophy. Interacts with the heterodimeric integrin alpha-IIb/beta3 (ITGA2B-ITGB3). Interacts with ITGA2B (via cytoplasmic domain); the interaction is direct and calcium-dependent. Interacts with the protein kinases PLK2/SNK and PRKDC (via the region immediately upstream of the kinase domain). Interacts with PLK3; the interaction inhibits PLK3 kinase activity. Interacts with PSEN2. Interacts (via C-terminus) with F8. Interacts with NBR1 (via C-terminus). Interacts with FEZ1 (via C-terminus). Interacts with UBR5 (via C-terminus); the interaction is sensitive to DNA damage, and may target CIB1 for ubiquitin-mediated degradation. Interacts with IFI6; the interaction is direct. Interacts with BCL2. Interacts with ITPR3; the interaction occurs in a calcium-dependent manner. Interacts with PTK2/FAK1. Interacts with MAP3K5; the interaction inhibits MAP3K5 activation by phosphorylation, and its subsequent interaction with TRAF2. Isoform 2 interacts with PRKD2 (via N-terminal AP-rich region), PTK2/FAK1 and PAK1. Interacts with TAS1R2 (via C-terminus); the interaction is independent of the myristoylation state of CIB1. Interacts (via C-terminal region) with STMN2 (via the N-terminal region); the interaction is direct, occurs in a calcium-dependent manner and attenuates the STMN2-induced neurite outgrowth inhibition. Interacts with SPHK1, the interaction occurs in a calcium-dependent manner. Interacts with ITGA2B (via C-terminal cytoplasmic tail); the interaction occurs upon platelet aggregation and is stabilized/increased in a calcium and magnesium-dependent manner. Interacts with PAK1 (via N-terminal region); the interaction is direct and occurs in a calcium-dependent manner. Interacts with RAC3 (via C-terminal region); the interaction induces their association with the cytoskeleton upon alpha-IIb/beta3 integrin-mediated adhesion. Interacts with ITGA5 and ITGAV. Interacts and forms a complex with TMC6 and TMC8; the interaction stabilizes each component of the complex. In terms of assembly, (Microbial infection) Interacts with human papillomavirus 4/HPV4 protein E8, human papillomavirus 5/HPV5 protein E1, and human papillomavirus 16/HPV16 proteins E2 and E5. Post-translationally, phosphorylation of isoform 2 at Ser-118 by PRKD2 increases its ability to stimulate tumor angiogenesis. In terms of tissue distribution, ubiquitously expressed. Expressed in the epidermis, hair follicles and keratinocytes. Detected in platelets and in cell lines of megakaryocytic and erythrocytic lineages. Both isoform 1 and isoform 2 are detected in various cancer cell lines, with isoform 2 being the predominant form (at protein level).

Its subcellular location is the membrane. It is found in the cell membrane. The protein resides in the sarcolemma. It localises to the apical cell membrane. The protein localises to the cell projection. Its subcellular location is the ruffle membrane. It is found in the filopodium tip. The protein resides in the growth cone. It localises to the lamellipodium. The protein localises to the cytoplasm. Its subcellular location is the cytoskeleton. It is found in the microtubule organizing center. The protein resides in the centrosome. It localises to the perinuclear region. The protein localises to the nucleus. Its subcellular location is the neuron projection. It is found in the perikaryon. The protein resides in the golgi apparatus. It localises to the trans-Golgi network. Functionally, calcium-binding protein that plays a role in the regulation of numerous cellular processes, such as cell differentiation, cell division, cell proliferation, cell migration, thrombosis, angiogenesis, cardiac hypertrophy and apoptosis. Involved in bone marrow megakaryocyte differentiation by negatively regulating thrombopoietin-mediated signaling pathway. Participates in the endomitotic cell cycle of megakaryocyte, a form of mitosis in which both karyokinesis and cytokinesis are interrupted. Plays a role in integrin signaling by negatively regulating alpha-IIb/beta3 activation in thrombin-stimulated megakaryocytes preventing platelet aggregation. Up-regulates PTK2/FAK1 activity, and is also needed for the recruitment of PTK2/FAK1 to focal adhesions; it thus appears to play an important role in focal adhesion formation. Positively regulates cell migration on fibronectin in a CDC42-dependent manner, the effect being negatively regulated by PAK1. Functions as a negative regulator of stress activated MAP kinase (MAPK) signaling pathways. Down-regulates inositol 1,4,5-trisphosphate receptor-dependent calcium signaling. Involved in sphingosine kinase SPHK1 translocation to the plasma membrane in a N-myristoylation-dependent manner preventing TNF-alpha-induced apoptosis. Regulates serine/threonine-protein kinase PLK3 activity for proper completion of cell division progression. Plays a role in microtubule (MT) dynamics during neuronal development; disrupts the MT depolymerization activity of STMN2 attenuating NGF-induced neurite outgrowth and the MT reorganization at the edge of lamellipodia. Promotes cardiomyocyte hypertrophy via activation of the calcineurin/NFAT signaling pathway. Stimulates calcineurin PPP3R1 activity by mediating its anchoring to the sarcolemma. In ischemia-induced (pathological or adaptive) angiogenesis, stimulates endothelial cell proliferation, migration and microvessel formation by activating the PAK1 and ERK1/ERK2 signaling pathway. Also promotes cancer cell survival and proliferation. May regulate cell cycle and differentiation of spermatogenic germ cells, and/or differentiation of supporting Sertoli cells. Forms a complex with TMC6/EVER1 and TMC8/EVER2 in lymphocytes and keratynocytes where CIB1 stabilizes TMC6 and TMC8 levels and reciprocally. Acts as a restriction factor that promotes keratinocyte-intrinsic immunity to human beta-papillomaviruses (HPVs). Its function is as follows. Plays a regulatory role in angiogenesis and tumor growth by mediating PKD/PRKD2-induced vascular endothelial growth factor A (VEGFA) secretion. In Homo sapiens (Human), this protein is Calcium and integrin-binding protein 1 (CIB1).